A 251-amino-acid chain; its full sequence is Probable transcriptional regulatory protein MSMEG_2940/MSMEI_2866 (251 aa).

This sequence belongs to the TACO1 family.

The protein localises to the cytoplasm. This is Probable transcriptional regulatory protein MSMEG_2940/MSMEI_2866 from Mycolicibacterium smegmatis (strain ATCC 700084 / mc(2)155) (Mycobacterium smegmatis).